Consider the following 137-residue polypeptide: Large ribosomal subunit protein uL16 (137 aa).

It belongs to the universal ribosomal protein uL16 family. In terms of assembly, part of the 50S ribosomal subunit.

Functionally, binds 23S rRNA and is also seen to make contacts with the A and possibly P site tRNAs. This Leptospira biflexa serovar Patoc (strain Patoc 1 / Ames) protein is Large ribosomal subunit protein uL16.